We begin with the raw amino-acid sequence, 455 residues long: Argininosuccinate lyase (455 aa).

It belongs to the lyase 1 family. Argininosuccinate lyase subfamily.

It is found in the cytoplasm. It catalyses the reaction 2-(N(omega)-L-arginino)succinate = fumarate + L-arginine. It participates in amino-acid biosynthesis; L-arginine biosynthesis; L-arginine from L-ornithine and carbamoyl phosphate: step 3/3. The sequence is that of Argininosuccinate lyase from Shewanella baltica (strain OS223).